The primary structure comprises 272 residues: 3-methyl-2-oxobutanoate hydroxymethyltransferase (272 aa).

The Mg(2+) site is built by aspartate 54 and aspartate 93. Residues 54-55 (DS), aspartate 93, and lysine 123 each bind 3-methyl-2-oxobutanoate. Residue glutamate 125 coordinates Mg(2+). Glutamate 190 (proton acceptor) is an active-site residue.

Belongs to the PanB family. As to quaternary structure, homodecamer; pentamer of dimers. Mg(2+) is required as a cofactor.

It is found in the cytoplasm. It carries out the reaction 3-methyl-2-oxobutanoate + (6R)-5,10-methylene-5,6,7,8-tetrahydrofolate + H2O = 2-dehydropantoate + (6S)-5,6,7,8-tetrahydrofolate. It participates in cofactor biosynthesis; (R)-pantothenate biosynthesis; (R)-pantoate from 3-methyl-2-oxobutanoate: step 1/2. In terms of biological role, catalyzes the reversible reaction in which hydroxymethyl group from 5,10-methylenetetrahydrofolate is transferred onto alpha-ketoisovalerate to form ketopantoate. The chain is 3-methyl-2-oxobutanoate hydroxymethyltransferase from Tropheryma whipplei (strain Twist) (Whipple's bacillus).